Reading from the N-terminus, the 382-residue chain is Mannitol-1-phosphate 5-dehydrogenase (382 aa).

Position 3–14 (3–14) interacts with NAD(+); it reads VLHFGAGNIGRG.

It belongs to the mannitol dehydrogenase family.

The catalysed reaction is D-mannitol 1-phosphate + NAD(+) = beta-D-fructose 6-phosphate + NADH + H(+). This chain is Mannitol-1-phosphate 5-dehydrogenase, found in Sodalis glossinidius (strain morsitans).